A 778-amino-acid polypeptide reads, in one-letter code: DISP complex protein LRCH3 (778 aa).

LRR repeat units follow at residues 56–79 (AAVTGVLSLSGRKLREFPRGAANH), 81–104 (LTDTTRADLSRNRLSEIPMEACHF), 105–127 (VSLESLNLYQNCIRYIPEAVLNL), 128–150 (QALTFLNISRNQLSTLPVHLCNL), 152–172 (LKVLIASNNKLVSLPEEIGHL), 173–195 (RHLTELDVSCNEIQTVPSQIGNL), 197–218 (ALRDFNVRRNHLLRLPEELAEV), 220–239 (LIRLDFSCNKITVIPVCYRN), 240–264 (LRHLQVITLDNNPLQSPPAQICIKG), and 266–290 (IHIFKYLNIQACKIAPDLPDYERRP). The segment at 56 to 290 (AAVTGVLSLS…PDLPDYERRP (235 aa)) is mediates interaction with DOCK7. Ser-324, Ser-415, and Ser-419 each carry phosphoserine. Residues 382–642 (TTEEEENDVK…PATDPTDAIT (261 aa)) form a mediates direct interaction with MYO6 region. Positions 511-536 (QKASHNPQRQQPPGNGECSFPSRRSQ) are disordered. Residues 514–523 (SHNPQRQQPP) show a composition bias toward polar residues. A phosphoserine mark is found at Ser-608 and Ser-625. Positions 645 to 758 (REEELKLIDQ…VTVQALLELA (114 aa)) constitute a Calponin-homology (CH) domain. The disordered stretch occupies residues 758 to 778 (APPKQPPPQQPQQQQPQLSAV). The segment covering 768–778 (PQQQQPQLSAV) has biased composition (low complexity).

As to quaternary structure, component of the DOCK7-induced septin displacement/DISP complex, at least composed of DOCK7, LRCH3 and MYO6.

The protein localises to the cytoplasm. Its function is as follows. As part of the DISP complex, may regulate the association of septins with actin and thereby regulate the actin cytoskeleton. The sequence is that of DISP complex protein LRCH3 from Mus musculus (Mouse).